The following is a 614-amino-acid chain: Probable zinc transporter protein DDB_G0269332 (614 aa).

2 disordered regions span residues 1–103 (MSDI…LPHL) and 115–178 (SSYN…NNEF). Residues 1–203 (MSDINSNSYD…NLNRDSDAKK (203 aa)) are Cytoplasmic-facing. Over residues 17–64 (QHQQESQYHPQQQQQQQQQQQQQQEYYNQQHQQESQYQQQSPPQQQYD) the composition is skewed to low complexity. Residues 80-92 (GHGRSHNSGHGHS) are compositionally biased toward basic residues. The span at 121–176 (NNSGDISNSNNNNNNNNQYNYNNNNNNNNYNNNINNNQFNSSVYNNNNNNNNNNNN) shows a compositional bias: low complexity. A helical transmembrane segment spans residues 204–224 (LAAWISVMLVFTIYEIFYGAY). Topologically, residues 225–233 (LESLGLVSD) are extracellular. Residues 234–254 (GFHALFDCIGMGIALLAMLVG) form a helical membrane-spanning segment. Topologically, residues 255–270 (KRGISNQEYTYGYDRW) are cytoplasmic. A helical transmembrane segment spans residues 271–291 (EVLGTFSNGCFLLFVSFFLFL). Topologically, residues 292–306 (ESIERLLEPPHIHNH) are extracellular. Residues 307–327 (GRVMSLATISLIINIVGVLFF) traverse the membrane as a helical segment. At 328–351 (KQKSNERKQQSSIRSENLLTISHH) the chain is on the cytoplasmic side. A helical transmembrane segment spans residues 352 to 372 (ILVDSCTSLGVILSSLVGQAF). Topologically, residues 373-377 (GLEIS) are extracellular. A helical transmembrane segment spans residues 378-398 (DSLISIIIACIIVYNALPICI). Residues 399–614 (KTSAILLQTT…NSSHSHAHNH (216 aa)) are Cytoplasmic-facing. A disordered region spans residues 483–614 (EGKHNSHSHG…NSSHSHAHNH (132 aa)). 2 stretches are compositionally biased toward basic residues: residues 487 to 499 (NSHS…HHPH) and 507 to 523 (SHNH…HGHS). The segment covering 525–535 (GGNDDHEHGEN) has biased composition (basic and acidic residues). Residues 548–567 (VQPTSPFSSHYTDIHSNNTP) show a composition bias toward polar residues. Positions 575–585 (QDDEDDEDDYD) are enriched in acidic residues. A compositionally biased stretch (basic and acidic residues) spans 586-599 (HDEHHHDHDHDEHH). Positions 600-614 (HGHSHNSSHSHAHNH) are enriched in basic residues.

The protein belongs to the cation diffusion facilitator (CDF) transporter (TC 2.A.4) family. SLC30A subfamily.

The protein resides in the membrane. In terms of biological role, may be involved in zinc transport from the cytoplasm to either intracellular organelles or extracellular spaces. In Dictyostelium discoideum (Social amoeba), this protein is Probable zinc transporter protein DDB_G0269332.